A 422-amino-acid polypeptide reads, in one-letter code: Glutamate-1-semialdehyde 2,1-aminomutase (422 aa).

Lysine 258 carries the N6-(pyridoxal phosphate)lysine modification.

This sequence belongs to the class-III pyridoxal-phosphate-dependent aminotransferase family. HemL subfamily. As to quaternary structure, homodimer. Pyridoxal 5'-phosphate is required as a cofactor.

It localises to the cytoplasm. It catalyses the reaction (S)-4-amino-5-oxopentanoate = 5-aminolevulinate. Its pathway is porphyrin-containing compound metabolism; protoporphyrin-IX biosynthesis; 5-aminolevulinate from L-glutamyl-tRNA(Glu): step 2/2. The polypeptide is Glutamate-1-semialdehyde 2,1-aminomutase (Chlamydia muridarum (strain MoPn / Nigg)).